The following is a 580-amino-acid chain: Probable alpha-1,3-mannosyltransferase MNT4 (580 aa).

Over 1–10 (MVLRIRRIKK) the chain is Cytoplasmic. A helical; Signal-anchor for type II membrane protein membrane pass occupies residues 11-29 (LAPLIFTSLLSLIVLFRVY). Residues 30-580 (RQYPFSDHFE…KVVELWNKVV (551 aa)) are Lumenal-facing. N-linked (GlcNAc...) asparagine glycans are attached at residues Asn132, Asn167, Asn223, and Asn349.

It belongs to the MNN1/MNT family.

Its subcellular location is the membrane. The protein is Probable alpha-1,3-mannosyltransferase MNT4 (MNT4) of Saccharomyces cerevisiae (strain ATCC 204508 / S288c) (Baker's yeast).